The chain runs to 137 residues: Large ribosomal subunit protein uL16 (137 aa).

Belongs to the universal ribosomal protein uL16 family. In terms of assembly, part of the 50S ribosomal subunit.

In terms of biological role, binds 23S rRNA and is also seen to make contacts with the A and possibly P site tRNAs. The protein is Large ribosomal subunit protein uL16 of Lactococcus lactis subsp. lactis (strain IL1403) (Streptococcus lactis).